The primary structure comprises 309 residues: Porphobilinogen deaminase (309 aa).

S-(dipyrrolylmethanemethyl)cysteine is present on Cys-241.

It belongs to the HMBS family. As to quaternary structure, monomer. Dipyrromethane is required as a cofactor.

The enzyme catalyses 4 porphobilinogen + H2O = hydroxymethylbilane + 4 NH4(+). Its pathway is porphyrin-containing compound metabolism; protoporphyrin-IX biosynthesis; coproporphyrinogen-III from 5-aminolevulinate: step 2/4. Its function is as follows. Tetrapolymerization of the monopyrrole PBG into the hydroxymethylbilane pre-uroporphyrinogen in several discrete steps. The polypeptide is Porphobilinogen deaminase (Bacillus cereus (strain B4264)).